We begin with the raw amino-acid sequence, 360 residues long: DNA polymerase IV (360 aa).

Residues 8–191 enclose the UmuC domain; it reads VLHVDMDSFF…LPVGRIPGIG (184 aa). Mg(2+) contacts are provided by Asp12 and Asp110. The active site involves Glu111.

Belongs to the DNA polymerase type-Y family. Monomer. It depends on Mg(2+) as a cofactor.

It localises to the cytoplasm. The enzyme catalyses DNA(n) + a 2'-deoxyribonucleoside 5'-triphosphate = DNA(n+1) + diphosphate. Functionally, poorly processive, error-prone DNA polymerase involved in untargeted mutagenesis. Copies undamaged DNA at stalled replication forks, which arise in vivo from mismatched or misaligned primer ends. These misaligned primers can be extended by PolIV. Exhibits no 3'-5' exonuclease (proofreading) activity. May be involved in translesional synthesis. This Methanoculleus marisnigri (strain ATCC 35101 / DSM 1498 / JR1) protein is DNA polymerase IV.